A 797-amino-acid chain; its full sequence is Protocadherin beta-9 (797 aa).

Residues 1 to 26 form the signal peptide; sequence MKTRGFSFPRQRQVLFLFLFWGVSLA. Residues 27–690 lie on the Extracellular side of the membrane; the sequence is GSGFGRYSVT…AQADLLTVYL (664 aa). Cadherin domains lie at 35 to 133, 138 to 242, 247 to 347, 352 to 451, and 456 to 561; these read VTEE…SPVF, MVLK…VPQF, YETQ…PPEL, LSNS…APAF, and YTLF…SPFV. Asn169 carries an N-linked (GlcNAc...) asparagine glycan. Asn418 is a glycosylation site (N-linked (GlcNAc...) asparagine). Asn567 carries N-linked (GlcNAc...) asparagine glycosylation. The Cadherin 6 domain maps to 568–671; it reads GSAPCTELVP…LVDGFSQPYL (104 aa). Residues 691–711 traverse the membrane as a helical segment; it reads VVALASVSSLFLLSVLLFVAV. Over 712 to 797 the chain is Cytoplasmic; sequence RLCRRSRAAS…TLPNSFGFNY (86 aa). Residues 777 to 797 form a disordered region; that stretch reads HRGGKEIEENSTLPNSFGFNY. The span at 786-797 shows a compositional bias: polar residues; that stretch reads NSTLPNSFGFNY.

Its subcellular location is the cell membrane. Potential calcium-dependent cell-adhesion protein. May be involved in the establishment and maintenance of specific neuronal connections in the brain. The chain is Protocadherin beta-9 (PCDHB9) from Homo sapiens (Human).